Here is a 513-residue protein sequence, read N- to C-terminus: ATP synthase subunit alpha (513 aa).

Residue 169-176 (GDRQTGKT) participates in ATP binding.

Belongs to the ATPase alpha/beta chains family. In terms of assembly, F-type ATPases have 2 components, CF(1) - the catalytic core - and CF(0) - the membrane proton channel. CF(1) has five subunits: alpha(3), beta(3), gamma(1), delta(1), epsilon(1). CF(0) has three main subunits: a(1), b(2) and c(9-12). The alpha and beta chains form an alternating ring which encloses part of the gamma chain. CF(1) is attached to CF(0) by a central stalk formed by the gamma and epsilon chains, while a peripheral stalk is formed by the delta and b chains.

The protein resides in the cell inner membrane. The catalysed reaction is ATP + H2O + 4 H(+)(in) = ADP + phosphate + 5 H(+)(out). Its function is as follows. Produces ATP from ADP in the presence of a proton gradient across the membrane. The alpha chain is a regulatory subunit. The polypeptide is ATP synthase subunit alpha (Edwardsiella ictaluri (strain 93-146)).